We begin with the raw amino-acid sequence, 673 residues long: Pesticin receptor (673 aa).

An N-terminal signal peptide occupies residues Met-1–Ala-22. Residues Ser-30–Ser-37 carry the TonB box motif. Residues Ser-41–Gln-155 enclose the TBDR plug domain. A TBDR beta-barrel domain is found at Thr-160–Phe-672. A TonB C-terminal box motif is present at residues Gln-657–Phe-673.

Belongs to the TonB-dependent receptor family.

Its subcellular location is the cell outer membrane. In terms of biological role, receptor for the bacteriocin pesticin and for the siderophore yersiniabactin. The polypeptide is Pesticin receptor (fyuA) (Yersinia enterocolitica serotype O:8 / biotype 1B (strain NCTC 13174 / 8081)).